We begin with the raw amino-acid sequence, 219 residues long: Cytidylate kinase (219 aa).

Glycine 15–threonine 23 lines the ATP pocket.

The protein belongs to the cytidylate kinase family. Type 1 subfamily.

Its subcellular location is the cytoplasm. The catalysed reaction is CMP + ATP = CDP + ADP. It carries out the reaction dCMP + ATP = dCDP + ADP. The protein is Cytidylate kinase of Brucella melitensis biotype 1 (strain ATCC 23456 / CCUG 17765 / NCTC 10094 / 16M).